Consider the following 181-residue polypeptide: Peptide deformylase (181 aa).

Fe cation-binding residues include Cys103 and His145. Glu146 is an active-site residue. His149 contacts Fe cation.

It belongs to the polypeptide deformylase family. The cofactor is Fe(2+).

It carries out the reaction N-terminal N-formyl-L-methionyl-[peptide] + H2O = N-terminal L-methionyl-[peptide] + formate. Functionally, removes the formyl group from the N-terminal Met of newly synthesized proteins. Requires at least a dipeptide for an efficient rate of reaction. N-terminal L-methionine is a prerequisite for activity but the enzyme has broad specificity at other positions. This is Peptide deformylase from Orientia tsutsugamushi (strain Ikeda) (Rickettsia tsutsugamushi).